A 313-amino-acid chain; its full sequence is Peroxidase 57 (313 aa).

The first 22 residues, 1–22 (MMKGAKFSSLLVLFFIFPIAFA), serve as a signal peptide directing secretion. 4 disulfide bridges follow: C33–C109, C66–C71, C115–C309, and C192–C224. H64 serves as the catalytic Proton acceptor. Ca(2+) contacts are provided by D65, V68, G70, D72, and S74. Position 155 (P155) interacts with substrate. H185 contributes to the heme b binding site. T186 is a binding site for Ca(2+). Ca(2+) contacts are provided by D233, S236, and D241.

This sequence belongs to the peroxidase family. Classical plant (class III) peroxidase subfamily. Heme b serves as cofactor. Ca(2+) is required as a cofactor. Mainly expressed in roots.

Its subcellular location is the secreted. The enzyme catalyses 2 a phenolic donor + H2O2 = 2 a phenolic radical donor + 2 H2O. Functionally, removal of H(2)O(2), oxidation of toxic reductants, biosynthesis and degradation of lignin, suberization, auxin catabolism, response to environmental stresses such as wounding, pathogen attack and oxidative stress. These functions might be dependent on each isozyme/isoform in each plant tissue. This chain is Peroxidase 57 (PER57), found in Arabidopsis thaliana (Mouse-ear cress).